Reading from the N-terminus, the 293-residue chain is Phosphoribosylaminoimidazole-succinocarboxamide synthase (293 aa).

The protein belongs to the SAICAR synthetase family.

It carries out the reaction 5-amino-1-(5-phospho-D-ribosyl)imidazole-4-carboxylate + L-aspartate + ATP = (2S)-2-[5-amino-1-(5-phospho-beta-D-ribosyl)imidazole-4-carboxamido]succinate + ADP + phosphate + 2 H(+). It functions in the pathway purine metabolism; IMP biosynthesis via de novo pathway; 5-amino-1-(5-phospho-D-ribosyl)imidazole-4-carboxamide from 5-amino-1-(5-phospho-D-ribosyl)imidazole-4-carboxylate: step 1/2. The polypeptide is Phosphoribosylaminoimidazole-succinocarboxamide synthase (Bordetella parapertussis (strain 12822 / ATCC BAA-587 / NCTC 13253)).